Reading from the N-terminus, the 100-residue chain is C-X-C motif chemokine 2 (100 aa).

Residues 1-27 (MAPPTCRLLSAALVLLLLLATNHQATG) form the signal peptide. Intrachain disulfides connect C36-C62 and C38-C78.

The protein belongs to the intercrine alpha (chemokine CxC) family. In terms of assembly, homotetramer.

The protein resides in the secreted. Chemotactic for human polymorphonuclear leukocytes but does not induce chemokinesis or an oxidative burst. This chain is C-X-C motif chemokine 2 (Cxcl2), found in Mus musculus (Mouse).